Reading from the N-terminus, the 95-residue chain is MALERCDVEKIAHLARLGLNDGELPRITDALNSILGLVDQMQAVDTTGIEPLAHPLEASQRLRPDQVTESNQRDAYQAIAPSTESGLYLVPKVIE.

The protein belongs to the GatC family. Heterotrimer of A, B and C subunits.

It carries out the reaction L-glutamyl-tRNA(Gln) + L-glutamine + ATP + H2O = L-glutaminyl-tRNA(Gln) + L-glutamate + ADP + phosphate + H(+). It catalyses the reaction L-aspartyl-tRNA(Asn) + L-glutamine + ATP + H2O = L-asparaginyl-tRNA(Asn) + L-glutamate + ADP + phosphate + 2 H(+). Functionally, allows the formation of correctly charged Asn-tRNA(Asn) or Gln-tRNA(Gln) through the transamidation of misacylated Asp-tRNA(Asn) or Glu-tRNA(Gln) in organisms which lack either or both of asparaginyl-tRNA or glutaminyl-tRNA synthetases. The reaction takes place in the presence of glutamine and ATP through an activated phospho-Asp-tRNA(Asn) or phospho-Glu-tRNA(Gln). This chain is Aspartyl/glutamyl-tRNA(Asn/Gln) amidotransferase subunit C, found in Pseudomonas putida (strain ATCC 700007 / DSM 6899 / JCM 31910 / BCRC 17059 / LMG 24140 / F1).